The following is a 359-amino-acid chain: Histidinol-phosphate aminotransferase (359 aa).

Residue Lys217 is modified to N6-(pyridoxal phosphate)lysine.

The protein belongs to the class-II pyridoxal-phosphate-dependent aminotransferase family. Histidinol-phosphate aminotransferase subfamily. As to quaternary structure, homodimer. The cofactor is pyridoxal 5'-phosphate.

The enzyme catalyses L-histidinol phosphate + 2-oxoglutarate = 3-(imidazol-4-yl)-2-oxopropyl phosphate + L-glutamate. It participates in amino-acid biosynthesis; L-histidine biosynthesis; L-histidine from 5-phospho-alpha-D-ribose 1-diphosphate: step 7/9. In Salmonella arizonae (strain ATCC BAA-731 / CDC346-86 / RSK2980), this protein is Histidinol-phosphate aminotransferase.